A 482-amino-acid polypeptide reads, in one-letter code: MSATSPAAVVVLAAGEGTRMKSKTPKVLHEISGRSLVGHVVAAARELDPQHLVVVVGHAREQVTAHLDAGDAPVRTAFQAEQNGTGHAVRMGLEELGGAVEGTVIVVCGDTPLLSGTTLGALAATHAADANAVTVLSAEVPDSTGYGRIVRDPATGAVTEIVEHKDATDEQRAIREINSGVFAFDGRLLGDALGKVRTDNSQGEEYLTDVLSILREAGHRVGACVAGDHREILGINNRLQLAEARRLLNERLLERAMLAGVTVVDPASTLIDATVTYERDAVVHPGTQLLGTTHLAEDSEVGPNARIENTAVGAGARVDNSVTLSAEIGAGALVGPYAYLRPGTRLGTKAKAGTYVEMKNATIGEGTKVPHLSYVGDATIGDHTNIGAASVFVNYDGVAKHHTTIGSHCRTGSDNMFVAPVTVGDGVYTAAGSVITKDVPAGSLAVARGQQRNIEGWVARKRPGSAAAQAAQASSQETDGQS.

The pyrophosphorylase stretch occupies residues 1 to 238; it reads MSATSPAAVV…HREILGINNR (238 aa). UDP-N-acetyl-alpha-D-glucosamine is bound by residues 12 to 15, K26, Q79, and 84 to 85; these read LAAG and GT. Mg(2+) is bound at residue D110. Residues G147, E163, N178, and N236 each contribute to the UDP-N-acetyl-alpha-D-glucosamine site. N236 contributes to the Mg(2+) binding site. The interval 239–259 is linker; that stretch reads LQLAEARRLLNERLLERAMLA. Positions 260-482 are N-acetyltransferase; the sequence is GVTVVDPAST…ASSQETDGQS (223 aa). Residues R341 and K359 each contribute to the UDP-N-acetyl-alpha-D-glucosamine site. The active-site Proton acceptor is H371. 2 residues coordinate UDP-N-acetyl-alpha-D-glucosamine: Y374 and N385. Residues A388, 394-395, S413, A431, and R448 contribute to the acetyl-CoA site; that span reads NY. Residues 458–482 form a disordered region; it reads VARKRPGSAAAQAAQASSQETDGQS. Residues 465-476 show a composition bias toward low complexity; it reads SAAAQAAQASSQ.

In the N-terminal section; belongs to the N-acetylglucosamine-1-phosphate uridyltransferase family. This sequence in the C-terminal section; belongs to the transferase hexapeptide repeat family. Homotrimer. It depends on Mg(2+) as a cofactor.

The protein resides in the cytoplasm. The catalysed reaction is alpha-D-glucosamine 1-phosphate + acetyl-CoA = N-acetyl-alpha-D-glucosamine 1-phosphate + CoA + H(+). It catalyses the reaction N-acetyl-alpha-D-glucosamine 1-phosphate + UTP + H(+) = UDP-N-acetyl-alpha-D-glucosamine + diphosphate. The protein operates within nucleotide-sugar biosynthesis; UDP-N-acetyl-alpha-D-glucosamine biosynthesis; N-acetyl-alpha-D-glucosamine 1-phosphate from alpha-D-glucosamine 6-phosphate (route II): step 2/2. It functions in the pathway nucleotide-sugar biosynthesis; UDP-N-acetyl-alpha-D-glucosamine biosynthesis; UDP-N-acetyl-alpha-D-glucosamine from N-acetyl-alpha-D-glucosamine 1-phosphate: step 1/1. It participates in bacterial outer membrane biogenesis; LPS lipid A biosynthesis. Catalyzes the last two sequential reactions in the de novo biosynthetic pathway for UDP-N-acetylglucosamine (UDP-GlcNAc). The C-terminal domain catalyzes the transfer of acetyl group from acetyl coenzyme A to glucosamine-1-phosphate (GlcN-1-P) to produce N-acetylglucosamine-1-phosphate (GlcNAc-1-P), which is converted into UDP-GlcNAc by the transfer of uridine 5-monophosphate (from uridine 5-triphosphate), a reaction catalyzed by the N-terminal domain. The chain is Bifunctional protein GlmU from Streptomyces griseus subsp. griseus (strain JCM 4626 / CBS 651.72 / NBRC 13350 / KCC S-0626 / ISP 5235).